Reading from the N-terminus, the 363-residue chain is 3-isopropylmalate dehydrogenase (363 aa).

78–91 serves as a coordination point for NAD(+); that stretch reads GPKWENLPPESQPE. 4 residues coordinate substrate: Arg-99, Arg-109, Arg-138, and Asp-227. 3 residues coordinate Mg(2+): Asp-227, Asp-251, and Asp-255. 285-297 contacts NAD(+); sequence GSAPDIAGKNIAN.

The protein belongs to the isocitrate and isopropylmalate dehydrogenases family. LeuB type 1 subfamily. In terms of assembly, homodimer. Mg(2+) serves as cofactor. The cofactor is Mn(2+).

It is found in the cytoplasm. It carries out the reaction (2R,3S)-3-isopropylmalate + NAD(+) = 4-methyl-2-oxopentanoate + CO2 + NADH. The protein operates within amino-acid biosynthesis; L-leucine biosynthesis; L-leucine from 3-methyl-2-oxobutanoate: step 3/4. In terms of biological role, catalyzes the oxidation of 3-carboxy-2-hydroxy-4-methylpentanoate (3-isopropylmalate) to 3-carboxy-4-methyl-2-oxopentanoate. The product decarboxylates to 4-methyl-2 oxopentanoate. This is 3-isopropylmalate dehydrogenase from Salmonella choleraesuis (strain SC-B67).